The following is a 423-amino-acid chain: Histidine--tRNA ligase (423 aa).

Belongs to the class-II aminoacyl-tRNA synthetase family. In terms of assembly, homodimer.

The protein resides in the cytoplasm. It carries out the reaction tRNA(His) + L-histidine + ATP = L-histidyl-tRNA(His) + AMP + diphosphate + H(+). This is Histidine--tRNA ligase from Prochlorococcus marinus (strain NATL1A).